The primary structure comprises 336 residues: Phosphonate dehydrogenase (336 aa).

NAD(+) is bound by residues 155 to 156, Glu175, 235 to 237, and Asp261; these read AI and PCR. Residue Arg237 is part of the active site. Residue Glu266 is part of the active site. His292 functions as the Proton donor in the catalytic mechanism. 292–295 contributes to the NAD(+) binding site; sequence HIGS.

In terms of assembly, homodimer.

It carries out the reaction phosphonate + NAD(+) + H2O = phosphate + NADH + H(+). Its activity is regulated as follows. Inhibited by NaCl, NADH and sulfite. Functionally, catalyzes phosphite (phosphonate) oxidation. This chain is Phosphonate dehydrogenase (ptxD), found in Stutzerimonas stutzeri (Pseudomonas stutzeri).